The chain runs to 437 residues: Perilipin-2 (437 aa).

Position 2 is an N-acetylalanine (alanine 2). Serine 215 is subject to Phosphoserine. Tyrosine 232 is subject to Phosphotyrosine. The segment at 412-437 is disordered; that stretch reads SQNAQDQGAEMDKSSQETQRSEHKTH. The span at 421 to 437 shows a compositional bias: basic and acidic residues; it reads EMDKSSQETQRSEHKTH.

It belongs to the perilipin family. Interacts with IRGC. Post-translationally, acylated; primarily with C14, C16 and C18 fatty acids. In terms of processing, phosphorylation at Tyr-232 by isoform 1 of CHKA (CHKalpha2) promotes dissociation from lipid droplets: dissociation is followed by recruitment of autophagosome machinery to lipid droplets and subsequent lipid droplet lipolysis. Polyubiquitination of Nt-acetylatable A-PLIN2 by MARCHF6 lead to degradation by 26S proteasomes. Milk lipid globules.

It is found in the membrane. The protein resides in the lipid droplet. Its function is as follows. Structural component of lipid droplets, which is required for the formation and maintenance of lipid storage droplets. This is Perilipin-2 from Homo sapiens (Human).